Reading from the N-terminus, the 323-residue chain is Methionyl-tRNA formyltransferase (323 aa).

118 to 121 (SLLP) contributes to the (6S)-5,6,7,8-tetrahydrofolate binding site.

It belongs to the Fmt family.

It carries out the reaction L-methionyl-tRNA(fMet) + (6R)-10-formyltetrahydrofolate = N-formyl-L-methionyl-tRNA(fMet) + (6S)-5,6,7,8-tetrahydrofolate + H(+). Functionally, attaches a formyl group to the free amino group of methionyl-tRNA(fMet). The formyl group appears to play a dual role in the initiator identity of N-formylmethionyl-tRNA by promoting its recognition by IF2 and preventing the misappropriation of this tRNA by the elongation apparatus. This is Methionyl-tRNA formyltransferase from Buchnera aphidicola subsp. Baizongia pistaciae (strain Bp).